Here is a 511-residue protein sequence, read N- to C-terminus: TNF receptor-associated factor family protein DDB_G0290931 (511 aa).

Residues 27–67 (CPICFELIYKKSIYQCSSGHYACQECWEKSLEIKQECMICR) form an RING-type; degenerate zinc finger. Residues 103-169 (IDGANQENED…RKLIKDEENG (67 aa)) adopt a coiled-coil conformation. A disordered region spans residues 107 to 159 (NQENEDEENEDEENEDDEDENEDEENGEDDEDKDEDEENENENEENKDEENEK). Acidic residues predominate over residues 109–155 (ENEDEENEDEENEDDEDENEDEENGEDDEDKDEDEENENENEENKDE). 2 TRAF-type zinc fingers span residues 181-234 (RHIQ…QVQL) and 236-293 (NHYD…SELQ). Positions 324–358 (ELLLKEIEKSKITCSELQRKNDELSSLITEIDDNY) form a coiled coil. The 126-residue stretch at 374 to 499 (GYTNKWIISN…DDKLTINIYV (126 aa)) folds into the MATH domain.

It belongs to the TNF receptor-associated factor family. A subfamily.

It is found in the cytoplasm. Its function is as follows. Probable adapter protein and signal transducer that links members of the tumor necrosis factor receptor family to different signaling pathways by association with the receptor cytoplasmic domain and kinases. This Dictyostelium discoideum (Social amoeba) protein is TNF receptor-associated factor family protein DDB_G0290931.